We begin with the raw amino-acid sequence, 407 residues long: Transcriptional regulator UL34 (407 aa).

Disordered stretches follow at residues alanine 268 to phenylalanine 330 and serine 388 to isoleucine 407. Residues glutamate 273 to aspartate 286 show a composition bias toward acidic residues. Positions glutamate 287–lysine 301 are enriched in basic and acidic residues. Residues proline 302 to valine 312 show a composition bias toward basic residues.

The protein belongs to the HHV-5 UL34 protein family.

The protein resides in the host nucleus. Its function is as follows. Acts as a transcriptional repressor of the US3 gene expression through a specific DNA sequence named the transcriptional repressive element (tre). This chain is Transcriptional regulator UL34 (UL34), found in Human cytomegalovirus (strain Towne) (HHV-5).